A 117-amino-acid chain; its full sequence is Fluoride-specific ion channel FluC 2 (117 aa).

2 helical membrane-spanning segments follow: residues 1–21 (MISIILVMIGGGFGAITRSAI) and 46–66 (FLIGLNIGLSISISWFPAFFV). Residues G71 and T74 each coordinate Na(+). A helical membrane pass occupies residues 95 to 115 (LFLNYSLLQFIIGFIACYIGY).

Belongs to the fluoride channel Fluc/FEX (TC 1.A.43) family.

It localises to the cell membrane. It carries out the reaction fluoride(in) = fluoride(out). With respect to regulation, na(+) is not transported, but it plays an essential structural role and its presence is essential for fluoride channel function. Functionally, fluoride-specific ion channel. Important for reducing fluoride concentration in the cell, thus reducing its toxicity. This Staphylococcus aureus (strain MSSA476) protein is Fluoride-specific ion channel FluC 2.